We begin with the raw amino-acid sequence, 546 residues long: Chaperonin GroEL (546 aa).

ATP contacts are provided by residues 29–32 (TMGP), Lys-50, 86–90 (DGTTT), Gly-414, and Asp-492.

Belongs to the chaperonin (HSP60) family. Forms a cylinder of 14 subunits composed of two heptameric rings stacked back-to-back. Interacts with the co-chaperonin GroES.

The protein localises to the cytoplasm. The catalysed reaction is ATP + H2O + a folded polypeptide = ADP + phosphate + an unfolded polypeptide.. Together with its co-chaperonin GroES, plays an essential role in assisting protein folding. The GroEL-GroES system forms a nano-cage that allows encapsulation of the non-native substrate proteins and provides a physical environment optimized to promote and accelerate protein folding. In Helicobacter pylori (strain Shi470), this protein is Chaperonin GroEL.